The chain runs to 271 residues: Putative phosphoenolpyruvate synthase regulatory protein (271 aa).

ADP is bound at residue 151 to 158 (GVSRSGKT).

Belongs to the pyruvate, phosphate/water dikinase regulatory protein family. PSRP subfamily.

It catalyses the reaction [pyruvate, water dikinase] + ADP = [pyruvate, water dikinase]-phosphate + AMP + H(+). It carries out the reaction [pyruvate, water dikinase]-phosphate + phosphate + H(+) = [pyruvate, water dikinase] + diphosphate. In terms of biological role, bifunctional serine/threonine kinase and phosphorylase involved in the regulation of the phosphoenolpyruvate synthase (PEPS) by catalyzing its phosphorylation/dephosphorylation. In Paraburkholderia phytofirmans (strain DSM 17436 / LMG 22146 / PsJN) (Burkholderia phytofirmans), this protein is Putative phosphoenolpyruvate synthase regulatory protein.